We begin with the raw amino-acid sequence, 247 residues long: MSALLIATNRYFDNHFERPGVKLLPNEFYTTAEDMVLMTVLGSCVAACLHDPYAGIGGMNHFMLPDDGADPGAAASESMRYGAYAMEVLINELIKAGGRRERFEAKVFGGAAVLAGMTTINIGDRNADFVRRYLALERIRITAEDLQGVHPRKVAFMPHSGRAMVKKLRLQVPGVTEREAALAREADRLRAARTRAQVELFAAKRPAAPQPARPRIELFGGRGTAPGAGSPSAGSPYAANLSRKQEA.

Residues 204 to 247 form a disordered region; it reads KRPAAPQPARPRIELFGGRGTAPGAGSPSAGSPYAANLSRKQEA. Low complexity predominate over residues 227 to 239; sequence GAGSPSAGSPYAA.

This sequence belongs to the CheD family.

The catalysed reaction is L-glutaminyl-[protein] + H2O = L-glutamyl-[protein] + NH4(+). Functionally, probably deamidates glutamine residues to glutamate on methyl-accepting chemotaxis receptors (MCPs), playing an important role in chemotaxis. The protein is Probable chemoreceptor glutamine deamidase CheD of Burkholderia orbicola (strain AU 1054).